The primary structure comprises 653 residues: Glyceraldehyde-3-phosphate:ferredoxin oxidoreductase (653 aa).

6 residues coordinate tungstopterin: arginine 70, glycine 89, arginine 196, alanine 197, glycine 199, and arginine 206. [4Fe-4S] cluster-binding residues include cysteine 333 and cysteine 337. The tungstopterin site is built by aspartate 378, aspartate 383, and aspartate 544. Cysteine 549 contacts [4Fe-4S] cluster.

This sequence belongs to the AOR/FOR family. As to quaternary structure, monomer. The cofactor is [4Fe-4S] cluster. Tungstopterin serves as cofactor.

It catalyses the reaction D-glyceraldehyde 3-phosphate + 2 oxidized [2Fe-2S]-[ferredoxin] + H2O = (2R)-3-phosphoglycerate + 2 reduced [2Fe-2S]-[ferredoxin] + 3 H(+). With respect to regulation, sensitive to oxygen. Activity increased by 58%-93% in the presence of acetyl phosphate, 3-phosphoglycerate or 2,3-bisphosphoglycerate at 10 mM concentration. Inhibited by up to 25% in the presence of crotonaldehyde or formaldehyde at 10 mM concentration. Inhibited by up to 50% by sodium dithionate. 3.5-fold increase in activity observed by addition of potassium phosphate or sodium arsenate at 200 mM concentration. Activity enhanced by potassium chloride, sodium citrate or sodium sulfate at 200 mM concentration. Catalyzes the oxidation of glyceraldehyde-3-phosphate to 3-phosphoglycerate. Uses ferredoxin as electron acceptor. In vitro can also use benzyl viologen, but not NADP or NAD, as electron acceptor. Probably acts as a glycolytic enzyme in place of glyceraldehyde-3-phosphate dehydrogenase (GAPDH) and phosphoglycerate kinase (PGK) in an unusual Emden-Meyerhof glycolysis. The protein is Glyceraldehyde-3-phosphate:ferredoxin oxidoreductase of Pyrococcus furiosus (strain ATCC 43587 / DSM 3638 / JCM 8422 / Vc1).